The following is a 542-amino-acid chain: Polysialoglycoprotein (542 aa).

The first 21 residues, 1-21 (MIMGGVRELLLVVMTVGVVKV), serve as a signal peptide directing secretion. The propeptide occupies 22 to 120 (SCYPVGKSQK…TSEAATGPSG (99 aa)). The segment at 70 to 542 (EEYLETNEVE…GPSGDDAMDI (473 aa)) is disordered. A compositionally biased stretch (polar residues) spans 78-95 (VESQASPNHGSSPANDAL). Residues 97-106 (SEEKLRRVSS) show a composition bias toward basic and acidic residues. A compositionally biased stretch (low complexity) spans 107–116 (DDAATSEAAT). 32 tandem repeats follow at residues 121–133 (DDAT…GPSG), 134–146 (DDAT…GPSG), 147–159 (DDAT…GPSG), 160–172 (DDAT…GPSG), 173–185 (DDAT…GPSG), 186–198 (DDAT…GPSG), 199–211 (DDAT…GPSG), 212–224 (DDAT…GPSG), 225–237 (DDAT…GPSG), 238–250 (DDAT…GPSG), 251–263 (DDAT…GPSG), 264–276 (DDAT…GPSG), 277–289 (DDAT…GPSG), 290–302 (DDAT…GPSG), 303–315 (DDAT…GPSG), 316–328 (DDAT…GPSG), 329–341 (DDAT…GPSG), 342–354 (DDAT…GPSG), 355–367 (DDAT…GPSG), 368–380 (DDAT…GPSG), 381–393 (DDAT…GPSG), 394–406 (DDAT…GPSG), 407–419 (DDAT…GPSG), 420–432 (DDAT…GPSG), 433–445 (DDAT…GPSG), 446–458 (DDAT…GPSG), 459–471 (DDAT…GPSG), 472–484 (DDAT…GPSG), 485–497 (DDAT…GPSG), 498–510 (DDAT…GPSG), 511–523 (DDAT…GPSG), and 524–536 (DDAT…GPSG). A 32 X 13 AA tandem repeats of D-D-A-T-S-E-A-A-T-G-P-S-G region spans residues 121-536 (DDATSEAATG…TSEAATGPSG (416 aa)). Residue T124 is glycosylated (O-linked (GalNAc...) threonine). S125 carries an O-linked (GalNAc...) serine glycan. 2 O-linked (GalNAc...) threonine glycosylation sites follow: T129 and T137. S138 is a glycosylation site (O-linked (GalNAc...) serine). O-linked (GalNAc...) threonine glycans are attached at residues T142 and T150. An O-linked (GalNAc...) serine glycan is attached at S151. O-linked (GalNAc...) threonine glycosylation is found at T155 and T163. O-linked (GalNAc...) serine glycosylation is present at S164. Residues T168 and T176 are each glycosylated (O-linked (GalNAc...) threonine). The O-linked (GalNAc...) serine glycan is linked to S177. O-linked (GalNAc...) threonine glycans are attached at residues T181 and T189. S190 carries O-linked (GalNAc...) serine glycosylation. 2 O-linked (GalNAc...) threonine glycosylation sites follow: T194 and T202. The O-linked (GalNAc...) serine glycan is linked to S203. Residues T207 and T215 are each glycosylated (O-linked (GalNAc...) threonine). The O-linked (GalNAc...) serine glycan is linked to S216. Residues T220 and T228 are each glycosylated (O-linked (GalNAc...) threonine). O-linked (GalNAc...) serine glycosylation occurs at S229. Residues T233 and T241 are each glycosylated (O-linked (GalNAc...) threonine). An O-linked (GalNAc...) serine glycan is attached at S242. 2 O-linked (GalNAc...) threonine glycosylation sites follow: T246 and T254. O-linked (GalNAc...) serine glycosylation occurs at S255. O-linked (GalNAc...) threonine glycans are attached at residues T259 and T267. S268 carries an O-linked (GalNAc...) serine glycan. 2 O-linked (GalNAc...) threonine glycosylation sites follow: T272 and T280. O-linked (GalNAc...) serine glycosylation occurs at S281. O-linked (GalNAc...) threonine glycans are attached at residues T285 and T293. S294 carries an O-linked (GalNAc...) serine glycan. Residues T298 and T306 are each glycosylated (O-linked (GalNAc...) threonine). An O-linked (GalNAc...) serine glycan is attached at S307. O-linked (GalNAc...) threonine glycans are attached at residues T311 and T319. The O-linked (GalNAc...) serine glycan is linked to S320. O-linked (GalNAc...) threonine glycans are attached at residues T324 and T332. The O-linked (GalNAc...) serine glycan is linked to S333. O-linked (GalNAc...) threonine glycans are attached at residues T337 and T345. The O-linked (GalNAc...) serine glycan is linked to S346. O-linked (GalNAc...) threonine glycosylation is found at T350 and T358. S359 carries O-linked (GalNAc...) serine glycosylation. O-linked (GalNAc...) threonine glycosylation is found at T363 and T371. S372 is a glycosylation site (O-linked (GalNAc...) serine). O-linked (GalNAc...) threonine glycosylation is found at T376 and T384. S385 carries O-linked (GalNAc...) serine glycosylation. O-linked (GalNAc...) threonine glycosylation is found at T389 and T397. A glycan (O-linked (GalNAc...) serine) is linked at S398. Residues T402 and T410 are each glycosylated (O-linked (GalNAc...) threonine). An O-linked (GalNAc...) serine glycan is attached at S411. O-linked (GalNAc...) threonine glycosylation is found at T415 and T423. A glycan (O-linked (GalNAc...) serine) is linked at S424. 2 O-linked (GalNAc...) threonine glycosylation sites follow: T428 and T436. An O-linked (GalNAc...) serine glycan is attached at S437. Residues T441 and T449 are each glycosylated (O-linked (GalNAc...) threonine). O-linked (GalNAc...) serine glycosylation is present at S450. Residues T454 and T462 are each glycosylated (O-linked (GalNAc...) threonine). A glycan (O-linked (GalNAc...) serine) is linked at S463. 2 O-linked (GalNAc...) threonine glycosylation sites follow: T467 and T475. A glycan (O-linked (GalNAc...) serine) is linked at S476. T480 and T488 each carry an O-linked (GalNAc...) threonine glycan. O-linked (GalNAc...) serine glycosylation occurs at S489. O-linked (GalNAc...) threonine glycosylation is found at T493 and T501. O-linked (GalNAc...) serine glycosylation is present at S502. O-linked (GalNAc...) threonine glycans are attached at residues T506 and T514. S515 is a glycosylation site (O-linked (GalNAc...) serine). O-linked (GalNAc...) threonine glycosylation is found at T519 and T527. O-linked (GalNAc...) serine glycosylation occurs at S528. T532 carries an O-linked (GalNAc...) threonine glycan. Positions 537–542 (DDAMDI) are excised as a propeptide.

Post-translationally, most sialic acid residues exist in the form of polysialyl groups partly capped with deaminoneuraminic acid. Cortical alveoli of immature ovaries.

In terms of biological role, in response to egg activation, PSGP is discharged by exocytosis into the perivitelline space, where it undergoes rapid proteolysis into glycotridecapeptides. During fertilization and/or early development the glycotridecapeptides prevent polyspermy or are involved in the formation of a fertilization membrane. The protein is Polysialoglycoprotein of Oncorhynchus mykiss (Rainbow trout).